The sequence spans 158 residues: MNRICHIEIDQTSPIPPTAEIEQERQVAIFDLLEENSFALPAREGRAPAEGPFRLTLAIREGRLVFDIRSEEEEKVGEFHLSLGPFRQVVKDYFHICESYFEAVKRLPPSQIEAIDMARRGIHNEGARVLKERLEGKAEVDIDTARRLFTLICVLHWG.

The protein belongs to the UPF0262 family.

This chain is UPF0262 protein RSKD131_1985, found in Cereibacter sphaeroides (strain KD131 / KCTC 12085) (Rhodobacter sphaeroides).